Reading from the N-terminus, the 384-residue chain is Tryptophan--tRNA ligase (384 aa).

The 'HIGH' region signature appears at 81 to 89 (PSGPMHIGH). Positions 252–256 (KMSAS) match the 'KMSKS' region motif.

The protein belongs to the class-I aminoacyl-tRNA synthetase family.

Its subcellular location is the cytoplasm. It carries out the reaction tRNA(Trp) + L-tryptophan + ATP = L-tryptophyl-tRNA(Trp) + AMP + diphosphate + H(+). This chain is Tryptophan--tRNA ligase, found in Thermococcus onnurineus (strain NA1).